The chain runs to 1868 residues: Inactive histone-lysine N-methyltransferase 2E (1868 aa).

Residues 63 to 66 (DHNY) carry the HCFC1-binding motif (HBM) motif. The PHD-type zinc-finger motif lies at 118–166 (VTRCICGFTHDDGYMICCDKCSVWQHIDCMGIDRQHIPDTYLCERCQPR). 8 residues coordinate Zn(2+): cysteine 121, cysteine 123, cysteine 135, cysteine 138, histidine 143, cysteine 146, cysteine 160, and cysteine 163. Disordered regions lie at residues 178-197 (RRKRENMSDGDTSATESGDE), 217-268 (ASRV…SSDS), and 308-329 (GSGNDSKDMNKSELSTNNSLFR). The 118-residue stretch at 330–447 (PPVESHIQKN…KGTEITIAFD (118 aa)) folds into the SET domain. The O-linked (GlcNAc) serine glycan is linked to serine 435. O-linked (GlcNAc) threonine glycosylation is present at threonine 440. The segment at 472 to 504 (KRSSESTENINSGYETRRKKGKKEKDTSKEKDI) is disordered. The segment covering 494–504 (KEKDTSKEKDI) has biased composition (basic and acidic residues). The stretch at 559-613 (VEMESEEQIAERKRKMTREERKMEAILQAFARLEKREKRREQALERISTAKTEVK) forms a coiled coil. Positions 646 to 670 (NRTKQRKSFSRSRTHIGQQRRRHRT) are enriched in basic residues. The tract at residues 646 to 682 (NRTKQRKSFSRSRTHIGQQRRRHRTVSMCSDIPPSSP) is disordered. A phosphoserine mark is found at serine 837 and serine 845. A compositionally biased stretch (low complexity) spans 884–908 (YSESSTPTPSPYATPTHTDITPTDP). 2 disordered regions span residues 884–924 (YSES…ETYR) and 1038–1068 (SMETPAHDRTEPSNQLDSTHSGRGTMYSSWV). A compositionally biased stretch (polar residues) spans 1049–1068 (PSNQLDSTHSGRGTMYSSWV). A Phosphoserine modification is found at serine 1070. 4 disordered regions span residues 1165 to 1222 (KRQR…PPPA), 1236 to 1315 (SSEE…SNHI), 1334 to 1565 (PDAE…QNQQ), and 1585 to 1842 (VFTS…QASP). The segment covering 1184-1197 (SVSPHPSGSLSSSG) has biased composition (low complexity). Over residues 1203 to 1213 (SSENGEQAENQ) the composition is skewed to polar residues. A Phosphoserine modification is found at serine 1282. A compositionally biased stretch (basic and acidic residues) spans 1282 to 1291 (SDHRKDKDSG). Low complexity-rich tracts occupy residues 1294 to 1312 (SPCVSCSPSHVQSPPSSHS) and 1348 to 1363 (PSPDTSQSPSKTSKPG). Residue serine 1364 is modified to Phosphoserine. Polar residues-rich tracts occupy residues 1389–1421 (ATVSEADNSVHQNPEPQHRQLSSNTPALSQNHA), 1451–1463 (HTENPPKSSTPHT), and 1488–1498 (SQSPQVGTPQR). Residues 1506-1518 (AAAQNLQANPQQA) show a composition bias toward low complexity. The span at 1519–1547 (TSGALFTQTPSGQSSATYSQFNQQSLNST) shows a compositional bias: polar residues. Positions 1548–1558 (APPPPPPPPPS) are enriched in pro residues. Residues 1585–1603 (VFTSGPNQALPGSTSQQSV) show a composition bias toward polar residues. The segment covering 1631-1642 (VPPPPPPPPAPG) has biased composition (pro residues). Over residues 1647–1656 (QQPSSHQQHS) the composition is skewed to polar residues. Over residues 1682 to 1692 (LPPPPPPPGPA) the composition is skewed to pro residues. The segment covering 1706 to 1716 (QSLQAQHQHVV) has biased composition (polar residues). Residues 1719-1732 (APPPPPPPPPPPPA) are compositionally biased toward pro residues. Polar residues predominate over residues 1806 to 1816 (QGPNSIPTPTA).

Belongs to the class V-like SAM-binding methyltransferase superfamily. Histone-lysine methyltransferase family. TRX/MLL subfamily. In terms of assembly, component of a complex composed of KMT2E, OGT and USP7; the complex stabilizes KMT2E, preventing KMT2E ubiquitination and proteasomal-mediated degradation. Interacts (via N-terminus) with OGT (via TRP repeats). Interacts with deubiquitinating enzyme USP7 (via MATH domain). Interacts (via HBM motif) with HCFC1 (via Kelch domain). Interacts with E2F1; the interaction is probably indirect and is mediated via HCFC1. Post-translationally, ubiquitinated. Deubiquitinated by USP7. In terms of processing, O-glycosylated at Ser-435 and Thr-440 in the SET domain by OGT which probably prevents KMT2E proteasomal-mediated degradation.

It localises to the chromosome. The protein localises to the cytoplasm. Its subcellular location is the cytoskeleton. The protein resides in the microtubule organizing center. It is found in the centrosome. It localises to the nucleus speckle. In terms of biological role, associates with chromatin regions downstream of transcriptional start sites of active genes and thus regulates gene transcription. Chromatin interaction is mediated via the binding to tri-methylated histone H3 at 'Lys-4' (H3K4me3). Key regulator of hematopoiesis involved in terminal myeloid differentiation and in the regulation of hematopoietic stem cell (HSCs) self-renewal by a mechanism that involves DNA methylation. Also acts as an important cell cycle regulator, participating in cell cycle regulatory network machinery at multiple cell cycle stages including G1/S transition, S phase progression and mitotic entry. Recruited to E2F1 responsive promoters by HCFC1 where it stimulates tri-methylation of histone H3 at 'Lys-4' and transcriptional activation and thereby facilitates G1 to S phase transition. During myoblast differentiation, required to suppress inappropriate expression of S-phase-promoting genes and maintain expression of determination genes in quiescent cells. The sequence is that of Inactive histone-lysine N-methyltransferase 2E (Kmt2e) from Mus musculus (Mouse).